A 347-amino-acid chain; its full sequence is Fructose-1,6-bisphosphatase class 1 2 (347 aa).

4 residues coordinate Mg(2+): Glu92, Asp111, Leu113, and Asp114. Substrate-binding positions include 114–117 and Asn202; that span reads DGSS. Glu274 contributes to the Mg(2+) binding site.

This sequence belongs to the FBPase class 1 family. Homotetramer. Mg(2+) serves as cofactor.

It is found in the cytoplasm. The enzyme catalyses beta-D-fructose 1,6-bisphosphate + H2O = beta-D-fructose 6-phosphate + phosphate. The protein operates within carbohydrate biosynthesis; Calvin cycle. In Bradyrhizobium sp. (strain BTAi1 / ATCC BAA-1182), this protein is Fructose-1,6-bisphosphatase class 1 2.